The primary structure comprises 283 residues: Thymidylate synthase (283 aa).

A dUMP-binding site is contributed by Arg-22. Residue Cys-160 is the Nucleophile of the active site. Residues 180–183, Asn-191, and 221–223 each bind dUMP; these read RSCD and HIY. Residue Asp-183 participates in (6R)-5,10-methylene-5,6,7,8-tetrahydrofolate binding. Ser-282 serves as a coordination point for (6R)-5,10-methylene-5,6,7,8-tetrahydrofolate.

The protein belongs to the thymidylate synthase family. Bacterial-type ThyA subfamily. As to quaternary structure, homodimer.

The protein localises to the cytoplasm. The enzyme catalyses dUMP + (6R)-5,10-methylene-5,6,7,8-tetrahydrofolate = 7,8-dihydrofolate + dTMP. The protein operates within pyrimidine metabolism; dTTP biosynthesis. In terms of biological role, catalyzes the reductive methylation of 2'-deoxyuridine-5'-monophosphate (dUMP) to 2'-deoxythymidine-5'-monophosphate (dTMP) while utilizing 5,10-methylenetetrahydrofolate (mTHF) as the methyl donor and reductant in the reaction, yielding dihydrofolate (DHF) as a by-product. This enzymatic reaction provides an intracellular de novo source of dTMP, an essential precursor for DNA biosynthesis. The sequence is that of Thymidylate synthase from Pasteurella multocida (strain Pm70).